Consider the following 165-residue polypeptide: Lithostathine (165 aa).

A signal peptide spans 1–21 (MTRNKYFILLSCLMVLSPSQG). At Gln-22 the chain carries Pyrrolidone carboxylic acid. One can recognise a C-type lectin domain in the interval 33 to 163 (ITCPEGSNAY…DAQLSFVCKF (131 aa)). Cystine bridges form between Cys-35/Cys-46, Cys-63/Cys-161, and Cys-136/Cys-153. An N-linked (GlcNAc...) asparagine glycan is attached at Asn-129.

As to expression, expressed only in regenerating islets, but not in normal pancreatic islets, insulinomas or regenerating liver.

The protein resides in the secreted. Its function is as follows. Might act as an inhibitor of spontaneous calcium carbonate precipitation. This is Lithostathine (Reg1) from Rattus norvegicus (Rat).